Consider the following 157-residue polypeptide: Protein Smg (157 aa).

The protein belongs to the Smg family.

The chain is Protein Smg from Shigella boydii serotype 18 (strain CDC 3083-94 / BS512).